A 74-amino-acid chain; its full sequence is Mu-Sparatoxin-Hp2 (74 aa).

Residues 1-20 form the signal peptide; it reads MKIIVLMMMLFAAFSAVVLA. Residues 21–35 constitute a propeptide that is removed on maturation; that stretch reads DKSIEDAALDTVMDR. Cystine bridges form between cysteine 42/cysteine 57, cysteine 49/cysteine 62, and cysteine 56/cysteine 66. Leucine 73 is modified (leucine amide).

As to expression, expressed by the venom gland.

It localises to the secreted. In terms of biological role, weakly nhibits voltage-gated sodium channels Nav1.7/SCN9A. High concentration of the toxin (3 uM) inhibits Nav1.7/SCN9A currents by 80%. In Heteropoda pingtungensis (Pingtung huntsman spider), this protein is Mu-Sparatoxin-Hp2.